Consider the following 365-residue polypeptide: MTPSSSGLEQSEIDAIQELEQTSRNDTLLKYHDICIDEGVIEQDVDMSCFSANSVGEWIVELIYQNNIKKLIMGATADSHYSEGMVHITPTKADYVIQHAPHCCNIWLVCNGNLIQTREGRFEHAGSAYSSSSSLHSIDSALIPYGGAGRAERVTEPHALSSSEEQSARGIEKMYYEEQRRRLEIEELKREKEQRDKMRRVREEALSSSSGVTKILYNEEVMRRREVEAELNRAKAEIEDMKRVQIELKEQHYADCRLLEKERDEAIKTTEELLRALEKGESSIPLQWSVSIEPPQCFICPISKDIMQNPHVAADGYTYEADEFRRWLNHGGEKSPMTNLRLENRNLIPNLVLRSAIKDWLQQHP.

A coiled-coil region spans residues 176–281; that stretch reads YEEQRRRLEI…ELLRALEKGE (106 aa). Residues 293-365 form the U-box domain; that stretch reads EPPQCFICPI…AIKDWLQQHP (73 aa).

The enzyme catalyses S-ubiquitinyl-[E2 ubiquitin-conjugating enzyme]-L-cysteine + [acceptor protein]-L-lysine = [E2 ubiquitin-conjugating enzyme]-L-cysteine + N(6)-ubiquitinyl-[acceptor protein]-L-lysine.. It functions in the pathway protein modification; protein ubiquitination. Functions as an E3 ubiquitin ligase. The protein is U-box domain-containing protein 56 (PUB56) of Arabidopsis thaliana (Mouse-ear cress).